Here is a 529-residue protein sequence, read N- to C-terminus: Glucose-6-phosphate isomerase (529 aa).

E322 acts as the Proton donor in catalysis. Residues H351 and K455 contribute to the active site.

The protein belongs to the GPI family.

It is found in the cytoplasm. It carries out the reaction alpha-D-glucose 6-phosphate = beta-D-fructose 6-phosphate. It functions in the pathway carbohydrate biosynthesis; gluconeogenesis. Its pathway is carbohydrate degradation; glycolysis; D-glyceraldehyde 3-phosphate and glycerone phosphate from D-glucose: step 2/4. In terms of biological role, catalyzes the reversible isomerization of glucose-6-phosphate to fructose-6-phosphate. The sequence is that of Glucose-6-phosphate isomerase from Thermosynechococcus vestitus (strain NIES-2133 / IAM M-273 / BP-1).